A 76-amino-acid polypeptide reads, in one-letter code: Serine proteinase inhibitor IA-2 (76 aa).

N-acetylserine is present on Ser-1.

This sequence belongs to the protease inhibitor I9 family.

Its function is as follows. Specifically inhibits an intracellular serine proteinase (proteinase A). The sequence is that of Serine proteinase inhibitor IA-2 from Pleurotus ostreatus (Oyster mushroom).